The primary structure comprises 38 residues: Photosystem II reaction center protein L (38 aa).

A helical transmembrane segment spans residues 17–37; sequence SLYWGLLLIFVLAVLFSNYFF.

Belongs to the PsbL family. PSII is composed of 1 copy each of membrane proteins PsbA, PsbB, PsbC, PsbD, PsbE, PsbF, PsbH, PsbI, PsbJ, PsbK, PsbL, PsbM, PsbT, PsbX, PsbY, PsbZ, Psb30/Ycf12, at least 3 peripheral proteins of the oxygen-evolving complex and a large number of cofactors. It forms dimeric complexes.

The protein resides in the plastid. It localises to the chloroplast thylakoid membrane. Functionally, one of the components of the core complex of photosystem II (PSII). PSII is a light-driven water:plastoquinone oxidoreductase that uses light energy to abstract electrons from H(2)O, generating O(2) and a proton gradient subsequently used for ATP formation. It consists of a core antenna complex that captures photons, and an electron transfer chain that converts photonic excitation into a charge separation. This subunit is found at the monomer-monomer interface and is required for correct PSII assembly and/or dimerization. This Oenothera argillicola (Appalachian evening primrose) protein is Photosystem II reaction center protein L.